The sequence spans 201 residues: Recombination protein RecR (201 aa).

The C4-type zinc finger occupies 57–72 (CADCRTFTEQDVCNIC). Residues 81–176 (GQICVVESPA…SASRIAHGVP (96 aa)) form the Toprim domain.

The protein belongs to the RecR family.

May play a role in DNA repair. It seems to be involved in an RecBC-independent recombinational process of DNA repair. It may act with RecF and RecO. The protein is Recombination protein RecR of Enterobacter sp. (strain 638).